A 486-amino-acid chain; its full sequence is Aspartyl/glutamyl-tRNA(Asn/Gln) amidotransferase subunit B (486 aa).

The protein belongs to the GatB/GatE family. GatB subfamily. In terms of assembly, heterotrimer of A, B and C subunits.

The enzyme catalyses L-glutamyl-tRNA(Gln) + L-glutamine + ATP + H2O = L-glutaminyl-tRNA(Gln) + L-glutamate + ADP + phosphate + H(+). The catalysed reaction is L-aspartyl-tRNA(Asn) + L-glutamine + ATP + H2O = L-asparaginyl-tRNA(Asn) + L-glutamate + ADP + phosphate + 2 H(+). Functionally, allows the formation of correctly charged Asn-tRNA(Asn) or Gln-tRNA(Gln) through the transamidation of misacylated Asp-tRNA(Asn) or Glu-tRNA(Gln) in organisms which lack either or both of asparaginyl-tRNA or glutaminyl-tRNA synthetases. The reaction takes place in the presence of glutamine and ATP through an activated phospho-Asp-tRNA(Asn) or phospho-Glu-tRNA(Gln). In Leptospira borgpetersenii serovar Hardjo-bovis (strain JB197), this protein is Aspartyl/glutamyl-tRNA(Asn/Gln) amidotransferase subunit B.